The sequence spans 169 residues: Probable metallophosphoesterase YsnB (169 aa).

Positions 8, 10, 35, 54, 78, 107, and 109 each coordinate Mn(2+).

Belongs to the metallophosphoesterase superfamily. YfcE family. The cofactor is Mn(2+).

The sequence is that of Probable metallophosphoesterase YsnB (ysnB) from Bacillus subtilis (strain 168).